The chain runs to 337 residues: tRNA N6-adenosine threonylcarbamoyltransferase (337 aa).

Residues H111 and H115 each coordinate Fe cation. Residues 134 to 138 (LVSGG), D167, G180, and N272 contribute to the substrate site. D300 lines the Fe cation pocket.

This sequence belongs to the KAE1 / TsaD family. It depends on Fe(2+) as a cofactor.

It is found in the cytoplasm. It carries out the reaction L-threonylcarbamoyladenylate + adenosine(37) in tRNA = N(6)-L-threonylcarbamoyladenosine(37) in tRNA + AMP + H(+). Required for the formation of a threonylcarbamoyl group on adenosine at position 37 (t(6)A37) in tRNAs that read codons beginning with adenine. Is involved in the transfer of the threonylcarbamoyl moiety of threonylcarbamoyl-AMP (TC-AMP) to the N6 group of A37, together with TsaE and TsaB. TsaD likely plays a direct catalytic role in this reaction. In Yersinia enterocolitica serotype O:8 / biotype 1B (strain NCTC 13174 / 8081), this protein is tRNA N6-adenosine threonylcarbamoyltransferase.